A 31-amino-acid polypeptide reads, in one-letter code: MINTNMKYWSWMGAFSLSMLFWAELLWIITH.

Residues 9 to 29 (WSWMGAFSLSMLFWAELLWII) form a helical membrane-spanning segment.

Its subcellular location is the cell inner membrane. In Escherichia coli (strain K12), this protein is Protein YmiC.